We begin with the raw amino-acid sequence, 984 residues long: Ephrin type-B receptor 1 (984 aa).

The N-terminal stretch at 1–17 (MALDCLLLFLLASAVAA) is a signal peptide. Topologically, residues 18–540 (MEETLMDTRT…YKSELREQLP (523 aa)) are extracellular. In terms of domain architecture, Eph LBD spans 19–201 (EETLMDTRTA…FFKKCPSIVQ (183 aa)). 2 consecutive Fibronectin type-III domains span residues 322–432 (VPSG…TNQA) and 433–528 (APST…TLTD). N-linked (GlcNAc...) asparagine glycans are attached at residues asparagine 334, asparagine 426, and asparagine 480. The chain crosses the membrane as a helical span at residues 541–563 (LIAGSAAAGVVFVVSLVAISIVC). Residues 564 to 984 (SRKRAYSKEA…QMNQSPSVMA (421 aa)) are Cytoplasmic-facing. Tyrosine 600 carries the phosphotyrosine modification. A Protein kinase domain is found at 619–882 (VKIEEVIGAG…EIVNTLDKMI (264 aa)). ATP contacts are provided by residues 625–633 (IGAGEFGEV) and lysine 651. The active-site Proton acceptor is the aspartate 744. One can recognise an SAM domain in the interval 911–975 (TAFTTVDDWL…LSSIHSMRVQ (65 aa)). Tyrosine 928 bears the Phosphotyrosine; by autocatalysis mark. The short motif at 982–984 (VMA) is the PDZ-binding element.

This sequence belongs to the protein kinase superfamily. Tyr protein kinase family. Ephrin receptor subfamily. In terms of assembly, heterotetramer upon binding of the ligand. The heterotetramer is composed of an ephrin dimer and a receptor dimer. Oligomerization is probably required to induce biological responses. Interacts with EPHB6; transphosphorylates EPHB6 to form an active signaling complex. Interacts with PICK1. Interacts (through Tyr-594) with NCK1 (via SH2 domain); activates the JUN cascade to regulate cell adhesion. The ligand-activated form interacts (through Tyr-928) with GRB7 and GRB10 (via SH2 domains). The ligand-activated form interacts (residues within the catalytic domain) with GRB2 (via SH2 domain). Interacts with GRB2, SHC1 and SRC; activates the MAPK/ERK cascade to regulate cell migration. Interacts with CBL; regulates receptor degradation through ubiquitination. Interacts with ACP1. In terms of processing, phosphorylated. Autophosphorylation is stimulated by the ligand EFNB1. Required for interaction with SH2 domain-containing interactors, for activation of the MAPK/ERK and JUN signaling cascades and for ubiquitination by CBL. Post-translationally, ubiquitinated; (EFNB1)ligand-induced poly- and/or multi-ubiquitination by CBL is regulated by SRC and leads to lysosomal degradation. Restricted to brain and testes.

The protein resides in the cell membrane. It localises to the early endosome membrane. Its subcellular location is the cell projection. The protein localises to the dendrite. It catalyses the reaction L-tyrosyl-[protein] + ATP = O-phospho-L-tyrosyl-[protein] + ADP + H(+). In terms of biological role, receptor tyrosine kinase which binds promiscuously transmembrane ephrin-B family ligands residing on adjacent cells, leading to contact-dependent bidirectional signaling into neighboring cells. The signaling pathway downstream of the receptor is referred to as forward signaling while the signaling pathway downstream of the ephrin ligand is referred to as reverse signaling. Cognate/functional ephrin ligands for this receptor include EFNB1, EFNB2 and EFNB3. During nervous system development, regulates retinal axon guidance redirecting ipsilaterally ventrotemporal retinal ganglion cells axons at the optic chiasm midline. This probably requires repulsive interaction with EFNB2. In the adult nervous system together with EFNB3, regulates chemotaxis, proliferation and polarity of the hippocampus neural progenitors. In addition to its role in axon guidance also plays an important redundant role with other ephrin-B receptors in development and maturation of dendritic spines and synapse formation. May also regulate angiogenesis. More generally, may play a role in targeted cell migration and adhesion. Upon activation by EFNB1 and probably other ephrin-B ligands activates the MAPK/ERK and the JNK signaling cascades to regulate cell migration and adhesion respectively. Involved in the maintenance of the pool of satellite cells (muscle stem cells) by promoting their self-renewal and reducing their activation and differentiation. The chain is Ephrin type-B receptor 1 (Ephb1) from Rattus norvegicus (Rat).